The primary structure comprises 203 residues: Dephospho-CoA kinase (203 aa).

The DPCK domain maps to 10–203 (IIGITGNIGS…LTGGAKGGRG (194 aa)). 18–23 (GSGKST) lines the ATP pocket.

It belongs to the CoaE family.

The protein resides in the cytoplasm. It catalyses the reaction 3'-dephospho-CoA + ATP = ADP + CoA + H(+). It participates in cofactor biosynthesis; coenzyme A biosynthesis; CoA from (R)-pantothenate: step 5/5. Catalyzes the phosphorylation of the 3'-hydroxyl group of dephosphocoenzyme A to form coenzyme A. The polypeptide is Dephospho-CoA kinase (Thermus thermophilus (strain ATCC BAA-163 / DSM 7039 / HB27)).